Reading from the N-terminus, the 86-residue chain is Elongation factor 1-beta (86 aa).

Belongs to the EF-1-beta/EF-1-delta family.

Promotes the exchange of GDP for GTP in EF-1-alpha/GDP, thus allowing the regeneration of EF-1-alpha/GTP that could then be used to form the ternary complex EF-1-alpha/GTP/AAtRNA. The sequence is that of Elongation factor 1-beta from Methanocorpusculum labreanum (strain ATCC 43576 / DSM 4855 / Z).